Here is a 377-residue protein sequence, read N- to C-terminus: Alanine dehydrogenase (377 aa).

Substrate contacts are provided by Arg-15 and Lys-74. Catalysis depends on His-95, which acts as the Proton donor/acceptor. Residues Ser-133, Asp-197, Arg-202, Ser-219, 238–239 (VL), 266–269 (VAID), and 304–307 (VGNM) each bind NAD(+). The active-site Proton donor/acceptor is the Asp-269.

The protein belongs to the AlaDH/PNT family. As to quaternary structure, homohexamer.

The enzyme catalyses L-alanine + NAD(+) + H2O = pyruvate + NH4(+) + NADH + H(+). It participates in organosulfur degradation; alkanesulfonate degradation. Involved in an anaerobic respiration pathway that converts the sulfonate taurine (2-aminoethanesulfonate) to ammonia, acetate and sulfide. Acts as an alanine dehydrogenase that regenerates pyruvate, the amino group acceptor for the taurine--pyruvate aminotransferase enzyme, and liberates ammonia. This chain is Alanine dehydrogenase, found in Bilophila wadsworthia (strain 3_1_6).